The sequence spans 190 residues: Putative acetyltransferase DDB_G0275913 (190 aa).

It belongs to the transferase hexapeptide repeat family.

The chain is Putative acetyltransferase DDB_G0275913 from Dictyostelium discoideum (Social amoeba).